The chain runs to 125 residues: Photosystem II extrinsic protein U (125 aa).

The N-terminal stretch at 1–29 (MKRLLSWLTGLVVMAGLLFSLATPSGVQA) is a signal peptide.

Belongs to the PsbU family. In terms of assembly, PSII is composed of 1 copy each of membrane proteins PsbA, PsbB, PsbC, PsbD, PsbE, PsbF, PsbH, PsbI, PsbJ, PsbK, PsbL, PsbM, PsbT, PsbX, PsbY, PsbZ, Psb30/Ycf12, peripheral proteins PsbO, CyanoQ (PsbQ), PsbU, PsbV and a large number of cofactors. It forms dimeric complexes.

Its subcellular location is the cellular thylakoid membrane. Its function is as follows. One of the extrinsic, lumenal subunits of photosystem II (PSII). PSII is a light-driven water plastoquinone oxidoreductase, using light energy to abstract electrons from H(2)O, generating a proton gradient subsequently used for ATP formation. The extrinsic proteins stabilize the structure of photosystem II oxygen-evolving complex (OEC), the ion environment of oxygen evolution and protect the OEC against heat-induced inactivation. This is Photosystem II extrinsic protein U from Synechococcus sp. (strain WH7803).